The primary structure comprises 358 residues: Protein Wnt-8 (358 aa).

The first 22 residues, 1-22 (MQNTTLFILATLLIFCPFFTAS), serve as a signal peptide directing secretion. A disulfide bond links C55 and C66. N-linked (GlcNAc...) asparagine glycosylation is present at N104. Disulfide bonds link C105/C113, C115/C133, C181/C195, C183/C190, C260/C298, C276/C291, C295/C337, C313/C328, C315/C325, and C320/C321. A lipid anchor (O-palmitoleoyl serine) is attached at S187. N-linked (GlcNAc...) asparagine glycans are attached at residues N263 and N282.

Belongs to the Wnt family. As to quaternary structure, homooligomer; disulfide-linked, leading to inactivation. Interacts with the long chain of cer1. Palmitoleoylation is required for efficient binding to frizzled receptors. Depalmitoleoylation leads to Wnt signaling pathway inhibition. Post-translationally, proteolytic processing by tiki1 and tiki2 promotes oxidation and formation of large disulfide-bond oligomers, leading to inactivation of wnt8.

The protein resides in the secreted. It localises to the extracellular space. It is found in the extracellular matrix. Its function is as follows. Ligand for members of the frizzled family of seven transmembrane receptors. Plays a role in ventral mesodermal patterning during embryogenesis. Mimics Nieuwkoop center activity. Causes dorsal mesodermal differentiation of animal cap ectoderm when coexpressed with noggin and nuclear, sequence-specific DNA-binding protein xBra. None of these molecules causes dorsal mesoderm formation when expressed alone. The protein is Protein Wnt-8 (wnt8) of Xenopus laevis (African clawed frog).